The sequence spans 28 residues: Probable small spore coat assembly protein B (28 aa).

A helical membrane pass occupies residues 4–24; it reads VFAGGFALLVVLFILLIIIGA.

This sequence belongs to the SscA family.

Its subcellular location is the membrane. The polypeptide is Probable small spore coat assembly protein B (Bacillus subtilis (strain 168)).